Reading from the N-terminus, the 342-residue chain is Cystein proteinase inhibitor protein salarin (342 aa).

The first 19 residues, 1–19, serve as a signal peptide directing secretion; that stretch reads MKSLVLLLLVAVTVSSVVS. An N-linked (GlcNAc) asparagine glycan is attached at asparagine 153. The O-linked (GlcNAc) threonine glycan is linked to threonine 184.

N-glycosylated, with sialylated biantennary complex-type glycans. Post-translationally, O-glycosylated, with sialylated oligosaccharides. In terms of tissue distribution, expressed in the skin, liver. intestine, spleen, pancreas and kidney.

It is found in the cytoplasm. The protein resides in the vacuole. In terms of biological role, inhibits papain and ficin (cysteine proteinases) but not trypsin (a serine proteinase). This is Cystein proteinase inhibitor protein salarin (salarin) from Salmo salar (Atlantic salmon).